The primary structure comprises 208 residues: Large ribosomal subunit protein uL4 (208 aa).

Residues 45–78 (RQGTAKSKERSEMSGSTRKLGRQKGSGGARRGDI) form a disordered region.

Belongs to the universal ribosomal protein uL4 family. In terms of assembly, part of the 50S ribosomal subunit.

Its function is as follows. One of the primary rRNA binding proteins, this protein initially binds near the 5'-end of the 23S rRNA. It is important during the early stages of 50S assembly. It makes multiple contacts with different domains of the 23S rRNA in the assembled 50S subunit and ribosome. In terms of biological role, forms part of the polypeptide exit tunnel. The protein is Large ribosomal subunit protein uL4 of Azobacteroides pseudotrichonymphae genomovar. CFP2.